Consider the following 344-residue polypeptide: DNA-directed RNA polymerase subunit alpha (344 aa).

The tract at residues 1–246 (MPMERFLKDF…EFLFPLVDFE (246 aa)) is alpha N-terminal domain (alpha-NTD). The tract at residues 259–344 (ESSNLLDMSI…VLSKNVKISE (86 aa)) is alpha C-terminal domain (alpha-CTD).

Belongs to the RNA polymerase alpha chain family. Homodimer. The RNAP catalytic core consists of 2 alpha, 1 beta, 1 beta' and 1 omega subunit. When a sigma factor is associated with the core the holoenzyme is formed, which can initiate transcription.

The enzyme catalyses RNA(n) + a ribonucleoside 5'-triphosphate = RNA(n+1) + diphosphate. Its function is as follows. DNA-dependent RNA polymerase catalyzes the transcription of DNA into RNA using the four ribonucleoside triphosphates as substrates. This is DNA-directed RNA polymerase subunit alpha from Borreliella afzelii (strain PKo) (Borrelia afzelii).